The primary structure comprises 225 residues: Heptaprenylglyceryl phosphate synthase (225 aa).

Lys6 lines the sn-glycerol 1-phosphate pocket. The Mg(2+) site is built by Asp8 and Thr34. Residues 153-158, Gly183, and 203-204 contribute to the sn-glycerol 1-phosphate site; these read YVEYSG and GN.

It belongs to the GGGP/HepGP synthase family. Group I subfamily. As to quaternary structure, homodimer. The cofactor is Mg(2+).

It catalyses the reaction sn-glycerol 1-phosphate + all-trans-heptaprenyl diphosphate = 3-heptaprenyl-sn-glycero-1-phosphate + diphosphate. Its pathway is membrane lipid metabolism; glycerophospholipid metabolism. Functionally, prenyltransferase that catalyzes in vivo the transfer of the heptaprenyl moiety of heptaprenyl pyrophosphate (HepPP; 35 carbon atoms) to the C3 hydroxyl of sn-glycerol-1-phosphate (G1P), producing heptaprenylglyceryl phosphate (HepGP). This reaction is an ether-bond-formation step in the biosynthesis of archaea-type G1P-based membrane lipids found in Bacillales. The polypeptide is Heptaprenylglyceryl phosphate synthase (Listeria innocua serovar 6a (strain ATCC BAA-680 / CLIP 11262)).